The following is a 158-amino-acid chain: MNVVQGNIESKNAKVAIVVSRFNSFVVDSLLDGAVDTLKRFGQVADENITVVKVPGAVELPLAARRVAASGKFDGIIALGAVIRGGTPHFDFVAGECNKGLAQVALEFDIPVSFGVLTTDTIEQAIERSGTKAGNKGGEAALGLLEMVNVLQALEEQL.

5-amino-6-(D-ribitylamino)uracil is bound by residues phenylalanine 22, 57–59, and 81–83; these read AVE and AVI. (2S)-2-hydroxy-3-oxobutyl phosphate is bound at residue 86–87; the sequence is GT. The active-site Proton donor is the histidine 89. Phenylalanine 114 lines the 5-amino-6-(D-ribitylamino)uracil pocket. Residue arginine 128 participates in (2S)-2-hydroxy-3-oxobutyl phosphate binding.

Belongs to the DMRL synthase family. As to quaternary structure, forms an icosahedral capsid composed of 60 subunits, arranged as a dodecamer of pentamers.

It carries out the reaction (2S)-2-hydroxy-3-oxobutyl phosphate + 5-amino-6-(D-ribitylamino)uracil = 6,7-dimethyl-8-(1-D-ribityl)lumazine + phosphate + 2 H2O + H(+). Its pathway is cofactor biosynthesis; riboflavin biosynthesis; riboflavin from 2-hydroxy-3-oxobutyl phosphate and 5-amino-6-(D-ribitylamino)uracil: step 1/2. Catalyzes the formation of 6,7-dimethyl-8-ribityllumazine by condensation of 5-amino-6-(D-ribitylamino)uracil with 3,4-dihydroxy-2-butanone 4-phosphate. This is the penultimate step in the biosynthesis of riboflavin. This chain is 6,7-dimethyl-8-ribityllumazine synthase, found in Shewanella pealeana (strain ATCC 700345 / ANG-SQ1).